A 236-amino-acid polypeptide reads, in one-letter code: Purine nucleoside phosphorylase DeoD-type (236 aa).

Residue H4 participates in a purine D-ribonucleoside binding. Phosphate-binding positions include G20, R24, R43, and 87 to 90; that span reads RVGT. A purine D-ribonucleoside is bound by residues 179–181 and 203–204; these read EME and SD. The Proton donor role is filled by D204.

Belongs to the PNP/UDP phosphorylase family. Homohexamer; trimer of homodimers.

It catalyses the reaction a purine D-ribonucleoside + phosphate = a purine nucleobase + alpha-D-ribose 1-phosphate. The catalysed reaction is a purine 2'-deoxy-D-ribonucleoside + phosphate = a purine nucleobase + 2-deoxy-alpha-D-ribose 1-phosphate. Functionally, catalyzes the reversible phosphorolytic breakdown of the N-glycosidic bond in the beta-(deoxy)ribonucleoside molecules, with the formation of the corresponding free purine bases and pentose-1-phosphate. The polypeptide is Purine nucleoside phosphorylase DeoD-type (Streptococcus pneumoniae (strain JJA)).